Here is a 307-residue protein sequence, read N- to C-terminus: MSKHVAVLMGGWSSEREISLRSGNACAEALEGEGYRVTRVNVGPDIATVLTELRPDAALNALHGPAGEDGTIQGLLEILKIPYTHSGVLASALAMHKERAKTVMRAAGVSVPEGRVVNRHDAAKSHPLTPPYVVKPIAEGSSMGVIIVRDERSHPPQILASDEWVYGEEVLAETYVAGRELTCAVLGDRALGVTEIKPVSGEWYDFDAKYAGGGSIHVLPADLKLNIYQRVQELALTAHQALGCRGVSRADLRYDDTPGGTGALVVLEVNTQPGMTQTSLVPEIAAHAGQSFGELVRWMVEDASLNR.

The region spanning 101 to 301 (KTVMRAAGVS…FGELVRWMVE (201 aa)) is the ATP-grasp domain. 127-182 (PLTPPYVVKPIAEGSSMGVIIVRDERSHPPQILASDEWVYGEEVLAETYVAGRELT) is an ATP binding site. Residues D251, E268, and N270 each coordinate Mg(2+).

The protein belongs to the D-alanine--D-alanine ligase family. The cofactor is Mg(2+). Requires Mn(2+) as cofactor.

The protein localises to the cytoplasm. It catalyses the reaction 2 D-alanine + ATP = D-alanyl-D-alanine + ADP + phosphate + H(+). Its pathway is cell wall biogenesis; peptidoglycan biosynthesis. In terms of biological role, cell wall formation. This Methylorubrum extorquens (strain PA1) (Methylobacterium extorquens) protein is D-alanine--D-alanine ligase.